A 605-amino-acid chain; its full sequence is MFSLPALLIGACAFAAAAVAASGDGCRAGCSLAIAAYYFSEGSNLTFIATIFAIGGGGYQALLPYNPAITNPDYVVTGDRVLVPFPCSCLGLPAAPASTFLAGAIPYPLPLPRGGGDTYDAVAANYADLTTAAWLEATNAYPPGRIPGGDGRVNVTINCSCGDERVSPRYGLFLTYPLWDGETLESVAAQYGFSSPAEMELIRRYNPGMGGVSGKGIVFIPVKDPNGSYHPLKSGGMGNSLSGGAIAGIVIACIAIFIVAIWLIIMFYRWQKFRKATSRPSPEETSHLDDASQAEGIKVERSIEFSYEEIFNATQGFSMEHKIGQGGFGSVYYAELRGEKTAIKKMGMQATQEFLAELKVLTHVHHLNLVRLIGYCVENCLFLVYEFIDNGNLSQHLQRTGYAPLSWATRVQIALDSARGLEYLHEHVVPVYVHRDIKSANILLDKDFRAKIADFGLAKLTEVGSMSQSLSTRVAGTFGYMPPEARYGEVSPKVDVYAFGVVLYELLSAKQAIVRSSESVSESKGLVFLFEEALSAPNPTEALDELIDPSLQGDYPVDSALKIASLAKSCTHEEPGMRPTMRSVVVALMALTANTDLRDMDYHPF.

An N-terminal signal peptide occupies residues Met1 to Ala20. Over Ala21–Ala245 the chain is Extracellular. Cystine bridges form between Cys26-Cys89, Cys30-Cys161, and Cys87-Cys159. Asn44 carries an N-linked (GlcNAc...) asparagine glycan. Residues Gly115–Ala121 and Pro142–Gly148 each bind chitin. Asn154 and Asn158 each carry an N-linked (GlcNAc...) asparagine glycan. The LysM domain maps to Leu174–Pro221. N-linked (GlcNAc...) asparagine glycosylation is present at Asn226. Residues Ile246 to Met266 form a helical membrane-spanning segment. Residues Phe267–Phe605 are Cytoplasmic-facing. Ser278 bears the Phosphoserine mark. Residues Phe317–Leu591 enclose the Protein kinase domain. ATP-binding positions include Ile323–Val331 and Lys344. Asp436 acts as the Proton acceptor in catalysis.

Belongs to the protein kinase superfamily. Ser/Thr protein kinase family.

It localises to the cell membrane. The enzyme catalyses L-seryl-[protein] + ATP = O-phospho-L-seryl-[protein] + ADP + H(+). The catalysed reaction is L-threonyl-[protein] + ATP = O-phospho-L-threonyl-[protein] + ADP + H(+). In Oryza sativa subsp. japonica (Rice), this protein is LysM domain receptor-like kinase 10.